A 78-amino-acid polypeptide reads, in one-letter code: Large ribosomal subunit protein bL28 (78 aa).

The interval M1 to T25 is disordered.

It belongs to the bacterial ribosomal protein bL28 family.

The sequence is that of Large ribosomal subunit protein bL28 from Aliivibrio salmonicida (strain LFI1238) (Vibrio salmonicida (strain LFI1238)).